The chain runs to 289 residues: 3-hydroxy-16-methoxy-2,3-dihydrotabersonine N-methyltransferase (289 aa).

The SAM motif I stretch occupies residues 71–80 (MLDVGSGLGG). An SAM motif II region spans residues 134–142 (GKFDVVFTI). Positions 161-170 (VAAPGAAIII) are SAM motif III. The Microbody targeting signal motif lies at 287–289 (KSI).

The protein belongs to the class I-like SAM-binding methyltransferase superfamily. gTMT family. Homodimer. In terms of tissue distribution, mainly expressed in young leaves, and, to a lower extent, in mature leaves, flowers, stems and roots (at protein level).

The protein resides in the thylakoid. Its subcellular location is the peroxisome. It carries out the reaction (3R)-3-hydroxy-16-methoxy-2,3-dihydrotabersonine + S-adenosyl-L-methionine = deacetoxyvindoline + S-adenosyl-L-homocysteine + H(+). It participates in alkaloid biosynthesis; vindoline biosynthesis. Its activity is regulated as follows. Inhibited by gamma-tocopherol. Functionally, S-adenosyl-L-methionine-dependent N-methyltransferase that catalyzes a nitrogen methylation involved in vindoline biosynthesis. Displays a strict requirement for a 2,3-dihydro bond in the aspidosperma skeleton. Can use 2,3-dihydrotabersonine, 2,3-dihydro-3-hydroxytabersonine and 2,3,6,7-tetraydro-3-hydroxytabersonine as substrates, but not tabersonine, vincadifformine, 21-hydroxycyclolochnericine, tryptamine, norharmane, harmaline, catharanthine, norajmaline, ajmaline, serpentine, ajmalicine, yohimbine or gamma-tocopherol. Inactive with picrinine as substrate. The protein is 3-hydroxy-16-methoxy-2,3-dihydrotabersonine N-methyltransferase of Catharanthus roseus (Madagascar periwinkle).